The chain runs to 1173 residues: Protein GIGANTEA (1173 aa).

Disordered regions lie at residues E150–L187, S604–G641, and S840–P863. 2 stretches are compositionally biased toward polar residues: residues S162 to S172 and Y613 to N633. The span at R854–P863 shows a compositional bias: basic and acidic residues.

Belongs to the GIGANTEA family. Interacts with SPY. Interacts with ADO1 (via N-terminus) and ADO2. Interacts with ADO3 (via N-terminus). Interacts (via N-terminus) with CDF1. Interacts (via N-terminus) with TCP4. As to expression, widely expressed with highest levels in inflorescence apices, young flowers and young siliques.

It is found in the nucleus. It localises to the cytoplasm. In terms of biological role, involved in regulation of circadian rhythm and photoperiodic flowering. May play a role in maintenance of circadian amplitude and period length. Is involved in phytochrome B signaling. Stabilizes ADO3 and the circadian photoreceptor ADO1/ZTL. Regulates 'CONSTANS' (CO) in the long-day flowering pathway by modulating the ADO3-dependent protein stability of CDF1 and CDF2, but is not essential to activate CO transcription. Regulates, via the microRNA miR172, a CO-independent pathway that promotes photoperiodic flowering by inducing 'FLOWERING LOCUS T'. The polypeptide is Protein GIGANTEA (GI) (Arabidopsis thaliana (Mouse-ear cress)).